The primary structure comprises 202 residues: Dephospho-CoA kinase (202 aa).

Residues 6-202 form the DPCK domain; sequence KVSITGDLSS…EYFYALKGAL (197 aa). 14 to 19 provides a ligand contact to ATP; the sequence is SSGKTE.

The protein belongs to the CoaE family.

It is found in the cytoplasm. The enzyme catalyses 3'-dephospho-CoA + ATP = ADP + CoA + H(+). The protein operates within cofactor biosynthesis; coenzyme A biosynthesis; CoA from (R)-pantothenate: step 5/5. Its function is as follows. Catalyzes the phosphorylation of the 3'-hydroxyl group of dephosphocoenzyme A to form coenzyme A. In Chlamydia pneumoniae (Chlamydophila pneumoniae), this protein is Dephospho-CoA kinase.